The following is a 793-amino-acid chain: Pentatricopeptide repeat-containing protein At1g03100, mitochondrial (793 aa).

The transit peptide at 1–87 (MFSLRKTKLQ…REAISSISGS (87 aa)) directs the protein to the mitochondrion. PPR repeat units follow at residues 257 to 291 (NTQV…GVKA), 292 to 322 (DANL…IDEA), 330 to 364 (FWQF…GKVA), 458 to 492 (TEEI…DSPV), 495 to 529 (DNSM…GVRT), 530 to 564 (GSSV…GIQL), 565 to 599 (DSSC…KILR), 601 to 631 (GNQK…IREV), 637 to 671 (GVHD…GHSP), 672 to 707 (NAQT…AAAT), and 713 to 747 (DQEL…NMFV).

It belongs to the PPR family. P subfamily.

The protein localises to the mitochondrion. The chain is Pentatricopeptide repeat-containing protein At1g03100, mitochondrial from Arabidopsis thaliana (Mouse-ear cress).